Consider the following 395-residue polypeptide: uncharacterized protein (395 aa).

2 disordered regions span residues 17 to 155 (EVKK…QVKT) and 276 to 304 (EEREKSAIKQNKEQSSEGSKTANQTHEQK). Composition is skewed to polar residues over residues 42 to 71 (DGNNQVNEPTGNDNTQVVENTEDISASNVV) and 81 to 96 (GDASTQSPETSENVVK). Positions 103–133 (VAEKPEKEDLAVIESEDKAAKPDGEIKKNVE) are enriched in basic and acidic residues. Residues 134-143 (TEVTSRSTSS) show a composition bias toward low complexity. Composition is skewed to basic and acidic residues over residues 144–155 (QEKDELEKQVKT) and 276–290 (EEREKSAIKQNKEQS). A coiled-coil region spans residues 224-351 (LKMNGKEDDL…QRRLKELEAM (128 aa)). Polar residues predominate over residues 291 to 300 (SEGSKTANQT).

It is found in the cytoplasm. This is an uncharacterized protein from Schizosaccharomyces pombe (strain 972 / ATCC 24843) (Fission yeast).